Consider the following 591-residue polypeptide: Aspartate--tRNA ligase (591 aa).

Glu-175 contacts L-aspartate. The interval 199-202 (QLFK) is aspartate. Residue Arg-221 participates in L-aspartate binding. ATP-binding positions include 221–223 (RDE) and Gln-230. His-449 serves as a coordination point for L-aspartate. Glu-483 serves as a coordination point for ATP. Arg-490 contributes to the L-aspartate binding site. ATP is bound at residue 535 to 538 (GLDR).

It belongs to the class-II aminoacyl-tRNA synthetase family. Type 1 subfamily. In terms of assembly, homodimer.

It localises to the cytoplasm. The catalysed reaction is tRNA(Asp) + L-aspartate + ATP = L-aspartyl-tRNA(Asp) + AMP + diphosphate. Catalyzes the attachment of L-aspartate to tRNA(Asp) in a two-step reaction: L-aspartate is first activated by ATP to form Asp-AMP and then transferred to the acceptor end of tRNA(Asp). The chain is Aspartate--tRNA ligase from Oceanobacillus iheyensis (strain DSM 14371 / CIP 107618 / JCM 11309 / KCTC 3954 / HTE831).